The sequence spans 162 residues: N5-carboxyaminoimidazole ribonucleotide mutase (162 aa).

Substrate is bound by residues Ser-11, Asp-14, and Arg-41.

The protein belongs to the AIR carboxylase family. Class I subfamily.

It carries out the reaction 5-carboxyamino-1-(5-phospho-D-ribosyl)imidazole + H(+) = 5-amino-1-(5-phospho-D-ribosyl)imidazole-4-carboxylate. It functions in the pathway purine metabolism; IMP biosynthesis via de novo pathway; 5-amino-1-(5-phospho-D-ribosyl)imidazole-4-carboxylate from 5-amino-1-(5-phospho-D-ribosyl)imidazole (N5-CAIR route): step 2/2. Functionally, catalyzes the conversion of N5-carboxyaminoimidazole ribonucleotide (N5-CAIR) to 4-carboxy-5-aminoimidazole ribonucleotide (CAIR). The polypeptide is N5-carboxyaminoimidazole ribonucleotide mutase (Bacillus subtilis (strain 168)).